Consider the following 431-residue polypeptide: SPI-1 type 3 secretion system ATPase (431 aa).

Residue 162–167 (GCGKTM) participates in ATP binding.

The protein belongs to the ATPase alpha/beta chains family. T3SS ATPase subfamily. The core secretion machinery of the T3SS is composed of approximately 20 different proteins, including cytoplasmic components, a base, an export apparatus and a needle. This subunit is part of the cytosolic complex. Forms homohexamers.

Its subcellular location is the cytoplasm. It catalyses the reaction ATP + H2O + cellular proteinSide 1 = ADP + phosphate + cellular proteinSide 2.. ATPase component of the type III secretion system (T3SS), also called injectisome, which is used to inject bacterial effector proteins into eukaryotic host cells. Acts as a molecular motor to provide the energy that is required for the export of proteins. Required for type III secretion apparatus (T3SA) formation, proper protein secretion, host cell invasion and virulence. May play a critical role in T3SS substrate recognition, disassembly of the effector/chaperone complex and unfolding of the effector in an ATP-dependent manner prior to secretion. In Salmonella typhi, this protein is SPI-1 type 3 secretion system ATPase.